We begin with the raw amino-acid sequence, 626 residues long: Serine/threonine-protein kinase PknB (626 aa).

The Cytoplasmic segment spans residues 1 to 332; it reads MTTPSHLSDR…DRSIGSVGRW (332 aa). One can recognise a Protein kinase domain in the interval 11 to 274; sequence YELGEILGFG…TAAEMRADLV (264 aa). ATP contacts are provided by residues 17–25, lysine 40, and 93–95; these read LGFGGMSEV and EYV. The active-site Proton acceptor is the aspartate 138. Residues 140–143 and aspartate 156 contribute to the ATP site; that span reads KPAN. Residues asparagine 143 and aspartate 156 each contribute to the Mg(2+) site. Phosphoserine; by autocatalysis occurs at positions 166 and 169. A phosphothreonine; by autocatalysis mark is found at threonine 171, threonine 173, and threonine 294. Serine 295 carries the phosphoserine; by autocatalysis modification. Residues 299–323 form a disordered region; the sequence is SAAGNLSGPRTDPLPRQDLDDTDRD. Residue threonine 309 is modified to Phosphothreonine; by autocatalysis. A compositionally biased stretch (basic and acidic residues) spans 311 to 323; sequence PLPRQDLDDTDRD. A helical membrane pass occupies residues 333–353; that stretch reads VAVVAVLAVLTVVVTIAINTF. Over 354-626 the chain is Extracellular; the sequence is GGITRDVQVP…DGIITLRFGQ (273 aa). 4 PASTA domains span residues 356-422, 423-490, 491-557, and 558-626; these read ITRD…NVST, GPEQ…IVGS, GPAT…QVSK, and GNQF…RFGQ.

The protein belongs to the protein kinase superfamily. Ser/Thr protein kinase family. As to quaternary structure, homodimer. In terms of processing, autophosphorylated. Dephosphorylated by PstP.

It localises to the cell membrane. The enzyme catalyses L-seryl-[protein] + ATP = O-phospho-L-seryl-[protein] + ADP + H(+). The catalysed reaction is L-threonyl-[protein] + ATP = O-phospho-L-threonyl-[protein] + ADP + H(+). In terms of biological role, protein kinase that regulates many aspects of mycobacterial physiology. Is a key component of a signal transduction pathway that regulates cell growth, cell shape and cell division via phosphorylation of target proteins. In Mycobacterium bovis (strain ATCC BAA-935 / AF2122/97), this protein is Serine/threonine-protein kinase PknB (pknB).